Here is a 353-residue protein sequence, read N- to C-terminus: Photosystem II D2 protein (353 aa).

T2 carries the post-translational modification N-acetylthreonine. At T2 the chain carries Phosphothreonine. Residues 41–61 form a helical membrane-spanning segment; it reads CAYFAVGGWFTGTTFVTSWYT. H118 serves as a coordination point for chlorophyll a. The helical transmembrane segment at 125–141 threads the bilayer; sequence GFMLRQFELARSVQLRP. Positions 130 and 143 each coordinate pheophytin a. A helical membrane pass occupies residues 153-166; that stretch reads VFVSVFLIYPLGQS. H198 lines the chlorophyll a pocket. Residues 208–228 traverse the membrane as a helical segment; it reads AALLCAIHGATVENTLFEDGD. A plastoquinone is bound by residues H215 and F262. Residue H215 participates in Fe cation binding. H269 is a binding site for Fe cation. Residues 279–295 traverse the membrane as a helical segment; that stretch reads GLWMSALGVVGLALNLR.

This sequence belongs to the reaction center PufL/M/PsbA/D family. In terms of assembly, PSII is composed of 1 copy each of membrane proteins PsbA, PsbB, PsbC, PsbD, PsbE, PsbF, PsbH, PsbI, PsbJ, PsbK, PsbL, PsbM, PsbT, PsbX, PsbY, PsbZ, Psb30/Ycf12, at least 3 peripheral proteins of the oxygen-evolving complex and a large number of cofactors. It forms dimeric complexes. Requires The D1/D2 heterodimer binds P680, chlorophylls that are the primary electron donor of PSII, and subsequent electron acceptors. It shares a non-heme iron and each subunit binds pheophytin, quinone, additional chlorophylls, carotenoids and lipids. There is also a Cl(-1) ion associated with D1 and D2, which is required for oxygen evolution. The PSII complex binds additional chlorophylls, carotenoids and specific lipids. as cofactor.

The protein localises to the plastid. It is found in the chloroplast thylakoid membrane. It carries out the reaction 2 a plastoquinone + 4 hnu + 2 H2O = 2 a plastoquinol + O2. In terms of biological role, photosystem II (PSII) is a light-driven water:plastoquinone oxidoreductase that uses light energy to abstract electrons from H(2)O, generating O(2) and a proton gradient subsequently used for ATP formation. It consists of a core antenna complex that captures photons, and an electron transfer chain that converts photonic excitation into a charge separation. The D1/D2 (PsbA/PsbD) reaction center heterodimer binds P680, the primary electron donor of PSII as well as several subsequent electron acceptors. D2 is needed for assembly of a stable PSII complex. The chain is Photosystem II D2 protein from Guizotia abyssinica (Niger).